Here is a 672-residue protein sequence, read N- to C-terminus: GPI mannosyltransferase pigv-1 (672 aa).

Over 1-134 (MRRREPGRDV…TQRCLGFCFR (134 aa)) the chain is Cytoplasmic. Residues 82–94 (REESDSSSSREDS) are compositionally biased toward basic and acidic residues. The tract at residues 82–115 (REESDSSSSREDSPLGSTETGESCSTTDDEESKE) is disordered. Residues 97-107 (GSTETGESCST) show a composition bias toward low complexity. A helical transmembrane segment spans residues 135–155 (QLFFSRMWVFILQFIASYYAG). The Extracellular segment spans residues 156 to 239 (DRFRTDGFNL…NGMESVFGWT (84 aa)). Residues 240 to 260 (FPPWVTITLAAVFVNLFCFLL) traverse the membrane as a helical segment. Residues 261–277 (CGMTLYQVVLIMTRSVK) lie on the Cytoplasmic side of the membrane. The next 2 membrane-spanning stretches (helical) occupy residues 278–298 (ISLL…FSSA) and 299–319 (YSES…LFGL). Topologically, residues 320–345 (RGKGFWHRMLKGFTGTICFGLTFAVR) are extracellular. A helical membrane pass occupies residues 346–366 (SNGLLNFLYVAWIWCGTLLWD). The Cytoplasmic portion of the chain corresponds to 367-423 (EEMPIPDCHKLISTLAATKNERYKQEWQAKFWRFQQKRKQNRKVFRWTDPNFSRCVT). Residues 424 to 444 (LFIVIVCAISATLLFFTPYVF) form a helical membrane-spanning segment. The Extracellular portion of the chain corresponds to 445 to 520 (MTNFTADEFC…WSVKFFGYWK (76 aa)). The helical transmembrane segment at 521–541 (IKKIPCFLMMLPAAILTVLAI) threads the bilayer. The Cytoplasmic segment spans residues 542 to 569 (KSSWNDVFLNKRWNNIWVLTARSDHSLP). The chain crosses the membrane as a helical span at residues 570–590 (MAIHSSVLLFVAIFYINSEVF). Residues 591 to 592 (TR) lie on the Extracellular side of the membrane. A helical membrane pass occupies residues 593 to 613 (IIFSSSPFIYIYIATYIDKLT). Topologically, residues 614–648 (QGTIAGNRLWQYFESPGILPFFVFRRVWQDGWRGK) are cytoplasmic. The helical transmembrane segment at 649-669 (LLYIYILGYFVFGTMAHSAWL) threads the bilayer. Over 670-672 (PFT) the chain is Extracellular.

This sequence belongs to the PIGV family. Expressed in epithelial tissues including the epidermis, pharynx, intestine, rectum and excretory cell during embryogenesis.

The protein localises to the endoplasmic reticulum membrane. The protein operates within glycolipid biosynthesis; glycosylphosphatidylinositol-anchor biosynthesis. Alpha-1,6-mannosyltransferase involved in glycosylphosphatidylinositol-anchor biosynthesis. Transfers the second mannose to the glycosylphosphatidylinositol during GPI precursor assembly. Required for maintenance of epithelial integrity during embryogenesis. In Caenorhabditis elegans, this protein is GPI mannosyltransferase pigv-1.